We begin with the raw amino-acid sequence, 1873 residues long: SAGA complex subunit Spt20 (1873 aa).

Belongs to the SPT20 family. In terms of assembly, component of the Spt-Ada-Gcn5 acetyltransferase (SAGA) complex consisting of wda/Taf5L, Saf6, Taf9, Taf10b, Taf12, Ada1, Spt3, Spt7, Spt20, Sf3b3, Sf3b5, Nipped-A/Tra1, a histone acetyltransferase (HAT) module made up of Gcn5, Ada2b (Isoform B), Ada3 and Sgf29, and a deubiquitinase (DUB) module made up of not/nonstop, Sgf11 and e(y)2 tethered to SAGA by Atxn7.

The protein resides in the nucleus. Component of the transcription regulatory complex SAGA, a multiprotein complex that activates transcription by remodeling chromatin and mediating histone acetylation and deubiquitination. The SAGA complex predominantly acetylates histone H3. The sequence is that of SAGA complex subunit Spt20 from Drosophila melanogaster (Fruit fly).